The chain runs to 183 residues: Apo-citrate lyase phosphoribosyl-dephospho-CoA transferase (183 aa).

The protein belongs to the CitX family.

It catalyses the reaction apo-[citrate lyase ACP] + 2'-(5''-triphospho-alpha-D-ribosyl)-3'-dephospho-CoA = holo-[citrate lyase ACP] + diphosphate. Functionally, transfers 2-(5''-triphosphoribosyl)-3'-dephosphocoenzyme-A on a serine residue to the apo-acyl carrier protein (gamma chain) of the citrate lyase to yield holo-acyl carrier protein. This Escherichia coli O7:K1 (strain IAI39 / ExPEC) protein is Apo-citrate lyase phosphoribosyl-dephospho-CoA transferase.